Here is a 154-residue protein sequence, read N- to C-terminus: Ribosomal RNA large subunit methyltransferase H (154 aa).

Gly103 lines the S-adenosyl-L-methionine pocket.

The protein belongs to the RNA methyltransferase RlmH family. Homodimer.

It localises to the cytoplasm. It catalyses the reaction pseudouridine(1915) in 23S rRNA + S-adenosyl-L-methionine = N(3)-methylpseudouridine(1915) in 23S rRNA + S-adenosyl-L-homocysteine + H(+). Its function is as follows. Specifically methylates the pseudouridine at position 1915 (m3Psi1915) in 23S rRNA. The protein is Ribosomal RNA large subunit methyltransferase H of Gemmatimonas aurantiaca (strain DSM 14586 / JCM 11422 / NBRC 100505 / T-27).